A 515-amino-acid polypeptide reads, in one-letter code: FAD-dependent oxidoreductase domain-containing protein 1 homolog (515 aa).

Residues 18–37 (AGATSNGSGSSGGDKSGEDL) form a disordered region. Residues 100 to 116 (VLIIGGGGVGSSIAYWL) traverse the membrane as a helical segment.

As to quaternary structure, associates with mitochondrial complex I assembly intermediates during its biogenesis. FAD is required as a cofactor.

It is found in the mitochondrion inner membrane. In terms of biological role, involved in the assembly of the mitochondrial membrane respiratory chain NADH dehydrogenase (Complex I). The protein is FAD-dependent oxidoreductase domain-containing protein 1 homolog of Drosophila melanogaster (Fruit fly).